The primary structure comprises 190 residues: Cytoglobin (190 aa).

The segment at 1–21 (MEKVPGDMEIERRERNEELSE) is disordered. One can recognise a Globin domain in the interval 18-167 (ELSEAERKAV…IYSHVTAAYK (150 aa)). An intrachain disulfide couples Cys38 to Cys83. Heme b contacts are provided by His81 and His113.

The protein belongs to the globin family. In terms of assembly, monomeric. Homodimer; disulfide-linked in vitro. Also homooligomeric in vitro. Post-translationally, the formation of an intramolecular disulfide bond between cysteines Cys-38 and Cys-83 specifically enhances the nitrite reductase activity. In terms of tissue distribution, widely expressed (at protein level).

The protein localises to the cytoplasm. It localises to the nucleus. It carries out the reaction Fe(II)-heme b-[protein] + nitric oxide + O2 = Fe(III)-heme b-[protein] + nitrate. The catalysed reaction is Fe(III)-heme b-[protein] + nitric oxide + H2O = Fe(II)-heme b-[protein] + nitrite + 2 H(+). It catalyses the reaction 2 superoxide + 2 H(+) = H2O2 + O2. The enzyme catalyses H2O2 + AH2 = A + 2 H2O. Its activity is regulated as follows. The nitric oxide dioxygenase activity is activated by a reducing system composed of cytochrome b5, its upstream reductase CYB5R3 and NADH. Its function is as follows. Probable multifunctional globin with a hexacoordinated heme iron required for the catalysis of various reactions depending on redox condition of the cell as well as oxygen availability. Has a nitric oxide dioxygenase (NOD) activity and is most probably involved in cell-mediated and oxygen-dependent nitric oxide consumption. By scavenging this second messenger may regulate several biological processes including endothelium-mediated vasodilation and vascular tone. Under normoxic conditions functions as a nitric oxide dioxygenase (NOD) but under hypoxic conditions the globin may switch its function to that of a nitrite (NO2) reductase (NiR), generating nitric oxide. Could also have peroxidase and superoxide dismutase activities, detoxifying reactive oxygen species and protecting cells against oxidative stress. Also binds dioxygen with low affinity and could function as an oxygen sensor but has probably no function as a respiratory oxygen carrier. This Rattus norvegicus (Rat) protein is Cytoglobin.